Here is a 215-residue protein sequence, read N- to C-terminus: Protein LURP-one-related 4 (215 aa).

Belongs to the LOR family.

Its function is as follows. Might be related to the phospholipid scramblase and tubby-like superfamily of membrane tethered transcription factors. The sequence is that of Protein LURP-one-related 4 from Arabidopsis thaliana (Mouse-ear cress).